Reading from the N-terminus, the 534-residue chain is CTP synthase (534 aa).

The amidoligase domain stretch occupies residues 1 to 268 (MAAKYIFVTG…DQIVCDHLQL (268 aa)). Serine 14 is a CTP binding site. Residue serine 14 participates in UTP binding. Residue 15–20 (SLGKGI) coordinates ATP. Tyrosine 55 lines the L-glutamine pocket. Residue aspartate 72 coordinates ATP. 2 residues coordinate Mg(2+): aspartate 72 and glutamate 142. CTP-binding positions include 149–151 (DIE), 189–194 (KSKPTQ), and lysine 225. UTP is bound by residues 189–194 (KSKPTQ) and lysine 225. One can recognise a Glutamine amidotransferase type-1 domain in the interval 293–534 (RIAIVGKYVE…FVRNALAAQA (242 aa)). Position 355 (glycine 355) interacts with L-glutamine. Residue cysteine 382 is the Nucleophile; for glutamine hydrolysis of the active site. L-glutamine is bound by residues 383-386 (LGMQ), glutamate 406, and arginine 463. Catalysis depends on residues histidine 508 and glutamate 510.

The protein belongs to the CTP synthase family. As to quaternary structure, homotetramer.

It carries out the reaction UTP + L-glutamine + ATP + H2O = CTP + L-glutamate + ADP + phosphate + 2 H(+). It catalyses the reaction L-glutamine + H2O = L-glutamate + NH4(+). The enzyme catalyses UTP + NH4(+) + ATP = CTP + ADP + phosphate + 2 H(+). It participates in pyrimidine metabolism; CTP biosynthesis via de novo pathway; CTP from UDP: step 2/2. With respect to regulation, allosterically activated by GTP, when glutamine is the substrate; GTP has no effect on the reaction when ammonia is the substrate. The allosteric effector GTP functions by stabilizing the protein conformation that binds the tetrahedral intermediate(s) formed during glutamine hydrolysis. Inhibited by the product CTP, via allosteric rather than competitive inhibition. Its function is as follows. Catalyzes the ATP-dependent amination of UTP to CTP with either L-glutamine or ammonia as the source of nitrogen. Regulates intracellular CTP levels through interactions with the four ribonucleotide triphosphates. This is CTP synthase from Shouchella clausii (strain KSM-K16) (Alkalihalobacillus clausii).